A 158-amino-acid chain; its full sequence is NADH-quinone oxidoreductase subunit B (158 aa).

Residues Cys37, Cys38, Cys102, and Cys132 each coordinate [4Fe-4S] cluster.

It belongs to the complex I 20 kDa subunit family. As to quaternary structure, NDH-1 is composed of 14 different subunits. Subunits NuoB, C, D, E, F, and G constitute the peripheral sector of the complex. It depends on [4Fe-4S] cluster as a cofactor.

The protein localises to the cell inner membrane. It carries out the reaction a quinone + NADH + 5 H(+)(in) = a quinol + NAD(+) + 4 H(+)(out). Functionally, NDH-1 shuttles electrons from NADH, via FMN and iron-sulfur (Fe-S) centers, to quinones in the respiratory chain. Couples the redox reaction to proton translocation (for every two electrons transferred, four hydrogen ions are translocated across the cytoplasmic membrane), and thus conserves the redox energy in a proton gradient. The sequence is that of NADH-quinone oxidoreductase subunit B from Hydrogenovibrio crunogenus (strain DSM 25203 / XCL-2) (Thiomicrospira crunogena).